Consider the following 481-residue polypeptide: Lincomycin resistance protein (481 aa).

14 consecutive transmembrane segments (helical) span residues 30–50 (WVTL…VTVV), 67–87 (QLTW…MVGG), 99–119 (LLFG…APNL), 127–147 (FGQG…IACS), 162–182 (VASV…QLFS), 185–205 (WIFL…LLLV), 215–235 (PVDL…IFGV), 245–265 (LPLA…FVAV), 285–305 (LVAN…FFLL), 318–338 (IEAG…CVLV), 340–360 (GLIE…LAGP), 374–394 (LLTS…GLVA), 421–441 (LGGA…HLGG), and 446–466 (FTVA…AVLA).

Belongs to the major facilitator superfamily. TCR/Tet family.

It is found in the cell membrane. In terms of biological role, proton-dependent transporter. May mediate the efflux of lincomycin. This chain is Lincomycin resistance protein (lmrA), found in Streptomyces lincolnensis.